The chain runs to 156 residues: Phospholipase A2 A2-hormotoxin-Apt1a (156 aa).

The signal sequence occupies residues 1–19 (MQLYTYFFTFSLVLILALA). A propeptide spanning residues 20–35 (DQENKSLDFTQEGGIA) is cleaved from the precursor. Cystine bridges form between cysteine 62-cysteine 156, cysteine 64-cysteine 80, cysteine 79-cysteine 138, cysteine 86-cysteine 131, and cysteine 115-cysteine 129. Residues glycine 65 and glycine 67 each contribute to the Ca(2+) site. The active site involves histidine 83. Aspartate 84 lines the Ca(2+) pocket. Aspartate 132 is a catalytic residue.

This sequence belongs to the phospholipase A2 family. It depends on Ca(2+) as a cofactor.

Its subcellular location is the secreted. The protein resides in the nematocyst. It carries out the reaction a 1,2-diacyl-sn-glycero-3-phosphocholine + H2O = a 1-acyl-sn-glycero-3-phosphocholine + a fatty acid + H(+). Functionally, sea anemone phospholipase A2 (PLA2) that may have a role both in defense and in digestion, since its expression and enzymatic activity were found both in the acontia (defensive organs) and tentacles. PLA2 catalyzes the calcium-dependent hydrolysis of the 2-acyl groups in 3-sn-phosphoglycerides. The sequence is that of Phospholipase A2 A2-hormotoxin-Apt1a from Adamsia palliata (Cloak anemone).